Here is a 406-residue protein sequence, read N- to C-terminus: ATP-dependent RNA helicase eIF4A (406 aa).

The Q motif signature appears at 25–53 (DSFDAMDLKPELLRGVYAYGFERPSAIQQ). The Helicase ATP-binding domain maps to 56 to 226 (ILPIIKGNDV…TKFMRDPVRI (171 aa)). 69-76 (AQSGTGKT) contacts ATP. Residues 174–177 (DEAD) carry the DEAD box motif. The Helicase C-terminal domain occupies 237-398 (GIKQFYIAVE…EMPMNVAGKF (162 aa)).

This sequence belongs to the DEAD box helicase family. eIF4A subfamily. As to quaternary structure, component of the eIF4F complex, which composition varies with external and internal environmental conditions. It is composed of at least eIF4A, eIF4E and eIF4G.

It localises to the cytoplasm. It catalyses the reaction ATP + H2O = ADP + phosphate + H(+). ATP-dependent RNA helicase which is a subunit of the eIF4F complex involved in cap recognition and is required for mRNA binding to ribosome. In the current model of translation initiation, eIF4A unwinds RNA secondary structures in the 5'-UTR of mRNAs which is necessary to allow efficient binding of the small ribosomal subunit, and subsequent scanning for the initiator codon. The sequence is that of ATP-dependent RNA helicase eIF4A (tif1) from Aspergillus fumigatus (strain ATCC MYA-4609 / CBS 101355 / FGSC A1100 / Af293) (Neosartorya fumigata).